A 118-amino-acid polypeptide reads, in one-letter code: Mediator of RNA polymerase II transcription subunit 11 (118 aa).

This sequence belongs to the Mediator complex subunit 11 family. Component of the Mediator complex.

Its subcellular location is the nucleus. Component of the Mediator complex, a coactivator involved in the regulated transcription of nearly all RNA polymerase II-dependent genes. Mediator functions as a bridge to convey information from gene-specific regulatory proteins to the basal RNA polymerase II transcription machinery. Mediator is recruited to promoters by direct interactions with regulatory proteins and serves as a scaffold for the assembly of a functional pre-initiation complex with RNA polymerase II and the general transcription factors. In Xenopus tropicalis (Western clawed frog), this protein is Mediator of RNA polymerase II transcription subunit 11 (med11).